We begin with the raw amino-acid sequence, 240 residues long: NADPH-flavin oxidoreductase (240 aa).

FMN-binding positions include 11–15, serine 39, 67–69, 128–131, and 167–169; these read HRSIR, QAY, YIGG, and KPR.

It belongs to the flavin oxidoreductase frp family. As to quaternary structure, homodimer.

The enzyme catalyses FMNH2 + NADP(+) = FMN + NADPH + 2 H(+). Catalyzes the NADPH-dependent reduction of FMN to FMNH(2). Involved in bioluminescence by providing FMNH(2) to luciferase. This chain is NADPH-flavin oxidoreductase, found in Vibrio harveyi (Beneckea harveyi).